The sequence spans 414 residues: Putative competence-damage inducible protein (414 aa).

Belongs to the CinA family.

The protein is Putative competence-damage inducible protein of Geobacillus kaustophilus (strain HTA426).